The primary structure comprises 438 residues: Lipoyl synthase, mitochondrial (438 aa).

The N-terminal 31 residues, 1–31 (MAASARGLRTLQSAHSSTTVPRLQLAVSRCY), are a transit peptide targeting the mitochondrion. A compositionally biased stretch (low complexity) spans 34–57 (TTSPDPPITNSSNSSNSSNSTPTP). Positions 34–58 (TTSPDPPITNSSNSSNSSNSTPTPK) are disordered. Positions 148, 153, 159, 179, 183, 186, and 394 each coordinate [4Fe-4S] cluster. One can recognise a Radical SAM core domain in the interval 162–383 (GSSKSAATAT…KERALEMGFL (222 aa)).

It belongs to the radical SAM superfamily. Lipoyl synthase family. The cofactor is [4Fe-4S] cluster.

The protein localises to the mitochondrion. It catalyses the reaction [[Fe-S] cluster scaffold protein carrying a second [4Fe-4S](2+) cluster] + N(6)-octanoyl-L-lysyl-[protein] + 2 oxidized [2Fe-2S]-[ferredoxin] + 2 S-adenosyl-L-methionine + 4 H(+) = [[Fe-S] cluster scaffold protein] + N(6)-[(R)-dihydrolipoyl]-L-lysyl-[protein] + 4 Fe(3+) + 2 hydrogen sulfide + 2 5'-deoxyadenosine + 2 L-methionine + 2 reduced [2Fe-2S]-[ferredoxin]. Its pathway is protein modification; protein lipoylation via endogenous pathway; protein N(6)-(lipoyl)lysine from octanoyl-[acyl-carrier-protein]: step 2/2. Catalyzes the radical-mediated insertion of two sulfur atoms into the C-6 and C-8 positions of the octanoyl moiety bound to the lipoyl domains of lipoate-dependent enzymes, thereby converting the octanoylated domains into lipoylated derivatives. The polypeptide is Lipoyl synthase, mitochondrial (Paracoccidioides brasiliensis (strain Pb18)).